The chain runs to 621 residues: Chaperone protein dnaK (621 aa).

Residues 597-621 (VYSSTQQDNSKTEDGSVIDTNSKEA) are disordered.

The protein belongs to the heat shock protein 70 family.

The protein resides in the plastid. The protein localises to the chloroplast. In terms of biological role, acts as a chaperone. This Gracilaria tenuistipitata var. liui (Red alga) protein is Chaperone protein dnaK.